A 116-amino-acid polypeptide reads, in one-letter code: Tyrosine-protein phosphatase 20 (116 aa).

The Tyrosine-protein phosphatase domain occupies tryptophan 1–valine 116. Aspartate 84 contacts substrate.

Belongs to the protein-tyrosine phosphatase family.

The enzyme catalyses O-phospho-L-tyrosyl-[protein] + H2O = L-tyrosyl-[protein] + phosphate. This chain is Tyrosine-protein phosphatase 20 (STY-20), found in Styela plicata (Wrinkled sea squirt).